The primary structure comprises 451 residues: Histidinol dehydrogenase (451 aa).

Residues 1-20 (MLNVTDLRGHTPSKSDIRRA) are disordered. Positions 7 to 19 (LRGHTPSKSDIRR) are enriched in basic and acidic residues. 3 residues coordinate NAD(+): tyrosine 129, glutamine 193, and asparagine 218. Substrate is bound by residues threonine 241, glutamine 263, and histidine 266. Zn(2+)-binding residues include glutamine 263 and histidine 266. Catalysis depends on proton acceptor residues glutamate 332 and histidine 333. Substrate contacts are provided by histidine 333, aspartate 366, glutamate 420, and histidine 425. Position 366 (aspartate 366) interacts with Zn(2+). Histidine 425 serves as a coordination point for Zn(2+).

The protein belongs to the histidinol dehydrogenase family. The cofactor is Zn(2+).

It carries out the reaction L-histidinol + 2 NAD(+) + H2O = L-histidine + 2 NADH + 3 H(+). It participates in amino-acid biosynthesis; L-histidine biosynthesis; L-histidine from 5-phospho-alpha-D-ribose 1-diphosphate: step 9/9. Functionally, catalyzes the sequential NAD-dependent oxidations of L-histidinol to L-histidinaldehyde and then to L-histidine. The protein is Histidinol dehydrogenase of Corynebacterium efficiens (strain DSM 44549 / YS-314 / AJ 12310 / JCM 11189 / NBRC 100395).